Reading from the N-terminus, the 329-residue chain is DNA polymerase III subunit delta' (329 aa).

Component of the DNA clamp loading complex consisting of tau(3):delta(1):delta'(1). The DNA polymerase III holoenzyme complex contains at least 10 different subunits organized into 3 functionally essential subassemblies: the Pol III core, the beta sliding clamp processivity factor and the clamp-loading complex. The Pol III core (subunits alpha, epsilon and theta) contains the polymerase and the 3'-5' exonuclease proofreading activities. The polymerase is tethered to the template via the dimeric beta sliding clamp processivity factor. The DNA clamp-loading complex assembles the beta sliding clamp onto the primed template and plays a central role in the organization and communication at the replication fork.

Its subcellular location is the cytoplasm. It is found in the nucleoid. The enzyme catalyses DNA(n) + a 2'-deoxyribonucleoside 5'-triphosphate = DNA(n+1) + diphosphate. Functionally, DNA polymerase III is a complex, multichain enzyme responsible for most of the replicative synthesis in bacteria. The protein is DNA polymerase III subunit delta' (holB) of Bacillus subtilis (strain 168).